The following is a 121-amino-acid chain: MQYLFVFIGGLFGALLRYVLSTLNVDSGLPLGTLIANIVGAFLMGYLSSLSIHFFKNNPLIKKGVTTGLLGALTTFSTFQFELVTMSQNNSIALLFIYGLTSYIGGILFCWFGVKLGGQPT.

4 helical membrane-spanning segments follow: residues 3-23, 27-47, 64-84, and 92-112; these read YLFVFIGGLFGALLRYVLSTL, SGLPLGTLIANIVGAFLMGYL, GVTTGLLGALTTFSTFQFELV, and IALLFIYGLTSYIGGILFCWF. Na(+)-binding residues include Gly-71 and Thr-74.

It belongs to the fluoride channel Fluc/FEX (TC 1.A.43) family.

It localises to the cell membrane. The enzyme catalyses fluoride(in) = fluoride(out). Na(+) is not transported, but it plays an essential structural role and its presence is essential for fluoride channel function. In terms of biological role, fluoride-specific ion channel. Important for reducing fluoride concentration in the cell, thus reducing its toxicity. The protein is Fluoride-specific ion channel FluC 2 of Staphylococcus haemolyticus (strain JCSC1435).